The chain runs to 411 residues: 2,3-bisphosphoglycerate-independent phosphoglycerate mutase (411 aa).

Belongs to the BPG-independent phosphoglycerate mutase family. A-PGAM subfamily.

It catalyses the reaction (2R)-2-phosphoglycerate = (2R)-3-phosphoglycerate. The protein operates within carbohydrate degradation; glycolysis; pyruvate from D-glyceraldehyde 3-phosphate: step 3/5. In terms of biological role, catalyzes the interconversion of 2-phosphoglycerate and 3-phosphoglycerate. This chain is 2,3-bisphosphoglycerate-independent phosphoglycerate mutase, found in Methanosphaerula palustris (strain ATCC BAA-1556 / DSM 19958 / E1-9c).